We begin with the raw amino-acid sequence, 489 residues long: Cysteine--tRNA ligase (489 aa).

Cys27 contacts Zn(2+). The 'HIGH' region signature appears at Val29–His39. Zn(2+) is bound by residues Cys211, His236, and Glu240. Residues Lys268 to Ser272 carry the 'KMSKS' region motif. Residue Lys271 coordinates ATP.

It belongs to the class-I aminoacyl-tRNA synthetase family. In terms of assembly, monomer. Zn(2+) is required as a cofactor.

It is found in the cytoplasm. The enzyme catalyses tRNA(Cys) + L-cysteine + ATP = L-cysteinyl-tRNA(Cys) + AMP + diphosphate. This chain is Cysteine--tRNA ligase, found in Prochlorococcus marinus (strain MIT 9312).